Here is a 1351-residue protein sequence, read N- to C-terminus: Alpha-latrotoxin-Lh1a (1351 aa).

A signal peptide spans 1 to 7 (SLVRMRR). Positions 4–7 (RMRR) are furin-like endopeptidase recognition region. The tract at residues 226–245 (VLYALLYGTQTYVSVMFFLL) is helix H8 is the probable transmembrane region of the tetrameric pore inserted in the target cell membrane. The cysteines at positions 401 and 1054 are disulfide-linked. ANK repeat units lie at residues 446 to 477 (LYNTANNPDSAVGFKEFTKLNYDGANIRATFE), 478 to 509 (QGRTVFHAAAKSGNSRIMIGLTFLVKSNELNQ), 513 to 542 (KGYTPIHVAADSGNAGIVNLLIQRGVSINS), 547 to 577 (FLQTPLHLAAQRGFVTTFQRLMESPEININE), 581 to 610 (DGFTPLHYAVRGGERILEAFINQIRIDLNA), 614 to 644 (KGLTPFHLAIIKDDWPVASTLLGSKKVDVNA), 648 to 678 (NNMTALHYAAILGYLETTKQLINLKEINADV), 683 to 711 (GLLSALHYAILYKHDDVASFLLRSSNVNV), 717 to 746 (GGITPLHLAVIQGRTQILSLMFDIGVNIEQ), 750 to 779 (EKYTPLHLAAMSKYPELIQILLDQGSNFEA), 783 to 812 (SGATPLHLATFKGKSKAALILLNNEVNWRD), 816 to 846 (NGQMPIHGAAMNGLLDVAQAIISIDATVLDI), 850 to 879 (NSDTPLNLAAQKSHIDVIKYFIDQGADINT), 883 to 912 (TGHAPLLAFSKKGNLDMVKYLFDKNANVYI), 916 to 945 (DGINFFYYAVRNGHLNIVKYAMSEKDKFEW), 959 to 991 (EECAISHFAVCDAVQFDKIEIVKYFVTTLGNFA), 992 to 1019 (ICGPLHQAARYGHLDIEKYLVEEEDLNV), 1023 to 1052 (KPDTPLCYASENGHLAVVQYLVSNGAKVNH), 1056 to 1085 (NGMTAIDKAITKNHLQVVQFLAANGVDFRR), 1089 to 1119 (LGATPFLTAVSENAFDIAEYLIRENRQDIDI), 1125 to 1154 (DKETALHLAVYYKNLQMIKLLVKYGIDMTI), and 1158 to 1187 (YDKTALDIATDLKNSNIVEYLKTKSGKFRR). Positions 1184–1187 (KFRR) are furin-like endopeptidase recognition region. Positions 1188–1351 (EYKSSYGEHS…LGSVIMNSHS (164 aa)) are excised as a propeptide.

Belongs to the cationic peptide 01 (latrotoxin) family. 03 (alpha-latrotoxin) subfamily. Homotetramer in membranes. Processed by furin-like proteases at both the N- and C-termini. As to expression, expressed in venom gland, cephalothorax, and abdomen tissues from both males and females.

It is found in the secreted. The protein localises to the target cell membrane. In terms of biological role, presynaptic neurotoxin that causes massive release of neurotransmitters from vertebrate (but not invertebrate) nerve terminals and endocrine cells via a complex mechanism involving activation of receptor(s) and toxin insertion into the plasma membrane with subsequent pore formation. Binds to neurexin-1-alpha (NRXN1) in a calcium dependent manner, adhesion G protein-coupled receptor L1 (ADGRL1, also termed latrophilin-1 and calcium-independent receptor of latrotoxin (CIRL)), and receptor-type tyrosine-protein phosphatase S (PTPRS), also termed PTP sigma. NRXN1 and PTPRS are suggested to provide a platform for binding and subsequent pore formation events. In contrast, binding to ADGRL1 does not involve oligomerization and channel formation, but direct downstream stimulation of the synaptic fusion machinery. Induces rapid muscle contracture and loss of twitch tension when added to the isolated and indirectly stimulated chick biventer cervicis nerve-muscle preparation. This chain is Alpha-latrotoxin-Lh1a, found in Latrodectus hasselti (Redback spider).